Here is a 93-residue protein sequence, read N- to C-terminus: UPF0457 protein GTNG_2792 (93 aa).

This sequence belongs to the UPF0457 family.

This Geobacillus thermodenitrificans (strain NG80-2) protein is UPF0457 protein GTNG_2792.